We begin with the raw amino-acid sequence, 293 residues long: TBC1 domain family member 7 (293 aa).

The Rab-GAP TBC domain occupies 50 to 231 (PLPSMYRALV…RVWDKVVSGS (182 aa)).

Component of the TSC-TBC complex (also named Rhebulator complex), composed of 2 molecules of TSC1, 2 molecules of TSC2 and 1 molecule of TBC1D7. Interacts with TSC1 (via C-terminal half of the coiled-coil domain). As to expression, highly expressed in heart, and slightly in kidney, liver and placenta.

Its subcellular location is the lysosome membrane. It is found in the cytoplasmic vesicle. The protein localises to the cytoplasm. The protein resides in the cytosol. Non-catalytic component of the TSC-TBC complex, a multiprotein complex that acts as a negative regulator of the canonical mTORC1 complex, an evolutionarily conserved central nutrient sensor that stimulates anabolic reactions and macromolecule biosynthesis to promote cellular biomass generation and growth. The TSC-TBC complex acts as a GTPase-activating protein (GAP) for the small GTPase RHEB, a direct activator of the protein kinase activity of mTORC1. In absence of nutrients, the TSC-TBC complex inhibits mTORC1, thereby preventing phosphorylation of ribosomal protein S6 kinase (RPS6KB1 and RPS6KB2) and EIF4EBP1 (4E-BP1) by the mTORC1 signaling. The TSC-TBC complex is inactivated in response to nutrients, relieving inhibition of mTORC1. The sequence is that of TBC1 domain family member 7 from Homo sapiens (Human).